The primary structure comprises 416 residues: Glutamyl-tRNA reductase (416 aa).

Substrate contacts are provided by residues 49–52, serine 105, 110–112, and glutamine 116; these read TCNR and EPQ. Residue cysteine 50 is the Nucleophile of the active site. 185–190 serves as a coordination point for NADP(+); that stretch reads GAGETI.

This sequence belongs to the glutamyl-tRNA reductase family. Homodimer.

It carries out the reaction (S)-4-amino-5-oxopentanoate + tRNA(Glu) + NADP(+) = L-glutamyl-tRNA(Glu) + NADPH + H(+). The protein operates within porphyrin-containing compound metabolism; protoporphyrin-IX biosynthesis; 5-aminolevulinate from L-glutamyl-tRNA(Glu): step 1/2. Catalyzes the NADPH-dependent reduction of glutamyl-tRNA(Glu) to glutamate 1-semialdehyde (GSA). This is Glutamyl-tRNA reductase from Shewanella oneidensis (strain ATCC 700550 / JCM 31522 / CIP 106686 / LMG 19005 / NCIMB 14063 / MR-1).